A 417-amino-acid chain; its full sequence is Carboxypeptidase A2 (417 aa).

An N-terminal signal peptide occupies residues 1–16 (MRLTPLLVALFGYIYC). The propeptide at 17–112 (QETFVGDQVL…EMLFNQQRER (96 aa)) is activation peptide. A Peptidase M14 domain is found at 120–412 (AYHTLEEIYQ…LGLKTIMEHV (293 aa)). 2 residues coordinate Zn(2+): histidine 177 and glutamate 180. Residues 177-180 (HARE), arginine 235, and 252-253 (NR) each bind substrate. An intrachain disulfide couples cysteine 246 to cysteine 269. Histidine 304 lines the Zn(2+) pocket. Residue 305–306 (SY) participates in substrate binding. Cysteine 318 and cysteine 352 are oxidised to a cystine. Tyrosine 356 serves as a coordination point for substrate. Residue glutamate 378 is the Proton donor/acceptor of the active site.

The protein belongs to the peptidase M14 family. Zn(2+) is required as a cofactor.

It localises to the secreted. It carries out the reaction Similar to that of carboxypeptidase A (EC 3.4.17.1), but with a preference for bulkier C-terminal residues.. In terms of biological role, carboxypeptidase that catalyzes the release of a C-terminal amino acid, with a preference for large aromatic C-terminal residues. The chain is Carboxypeptidase A2 (Cpa2) from Mus musculus (Mouse).